The primary structure comprises 143 residues: Large ribosomal subunit protein uL11 (143 aa).

This sequence belongs to the universal ribosomal protein uL11 family. As to quaternary structure, part of the ribosomal stalk of the 50S ribosomal subunit. Interacts with L10 and the large rRNA to form the base of the stalk. L10 forms an elongated spine to which L12 dimers bind in a sequential fashion forming a multimeric L10(L12)X complex. Post-translationally, one or more lysine residues are methylated.

Its function is as follows. Forms part of the ribosomal stalk which helps the ribosome interact with GTP-bound translation factors. The chain is Large ribosomal subunit protein uL11 from Aromatoleum aromaticum (strain DSM 19018 / LMG 30748 / EbN1) (Azoarcus sp. (strain EbN1)).